The primary structure comprises 358 residues: Peptide chain release factor 1 (358 aa).

N5-methylglutamine is present on Gln233.

This sequence belongs to the prokaryotic/mitochondrial release factor family. Methylated by PrmC. Methylation increases the termination efficiency of RF1.

It is found in the cytoplasm. Functionally, peptide chain release factor 1 directs the termination of translation in response to the peptide chain termination codons UAG and UAA. The chain is Peptide chain release factor 1 from Geobacillus kaustophilus (strain HTA426).